A 195-amino-acid chain; its full sequence is Recombination protein RecR (195 aa).

The C4-type zinc finger occupies Cys-54 to Cys-69. A Toprim domain is found at Ala-77 to Pro-172.

This sequence belongs to the RecR family.

Its function is as follows. May play a role in DNA repair. It seems to be involved in an RecBC-independent recombinational process of DNA repair. It may act with RecF and RecO. The protein is Recombination protein RecR of Treponema denticola (strain ATCC 35405 / DSM 14222 / CIP 103919 / JCM 8153 / KCTC 15104).